The chain runs to 179 residues: Inosine/xanthosine triphosphatase (179 aa).

8 to 13 (TTNPAK) is a substrate binding site. Residues Asp-38 and Glu-68 each coordinate Mg(2+). 68-69 (EA) is a substrate binding site.

It belongs to the YjjX NTPase family. Homodimer. It depends on Mg(2+) as a cofactor. Mn(2+) serves as cofactor.

It catalyses the reaction XTP + H2O = XDP + phosphate + H(+). The catalysed reaction is ITP + H2O = IDP + phosphate + H(+). Functionally, phosphatase that hydrolyzes non-canonical purine nucleotides such as XTP and ITP to their respective diphosphate derivatives. Probably excludes non-canonical purines from DNA/RNA precursor pool, thus preventing their incorporation into DNA/RNA and avoiding chromosomal lesions. The protein is Inosine/xanthosine triphosphatase of Proteus mirabilis (strain HI4320).